The following is a 293-amino-acid chain: Acetyl-coenzyme A carboxylase carboxyl transferase subunit beta (293 aa).

The CoA carboxyltransferase N-terminal domain maps to 29–293; that stretch reads LWVKCSECSQ…GVKELAEANT (265 aa). Residues Cys-33, Cys-36, Cys-52, and Cys-55 each coordinate Zn(2+). Residues 33–55 form a C4-type zinc finger; it reads CSECSQVAYRKDLISNFNVCSNC.

This sequence belongs to the AccD/PCCB family. Acetyl-CoA carboxylase is a heterohexamer composed of biotin carboxyl carrier protein (AccB), biotin carboxylase (AccC) and two subunits each of ACCase subunit alpha (AccA) and ACCase subunit beta (AccD). Requires Zn(2+) as cofactor.

It is found in the cytoplasm. It carries out the reaction N(6)-carboxybiotinyl-L-lysyl-[protein] + acetyl-CoA = N(6)-biotinyl-L-lysyl-[protein] + malonyl-CoA. It functions in the pathway lipid metabolism; malonyl-CoA biosynthesis; malonyl-CoA from acetyl-CoA: step 1/1. Functionally, component of the acetyl coenzyme A carboxylase (ACC) complex. Biotin carboxylase (BC) catalyzes the carboxylation of biotin on its carrier protein (BCCP) and then the CO(2) group is transferred by the transcarboxylase to acetyl-CoA to form malonyl-CoA. This Prochlorococcus marinus (strain MIT 9301) protein is Acetyl-coenzyme A carboxylase carboxyl transferase subunit beta.